A 751-amino-acid polypeptide reads, in one-letter code: Photosystem I P700 chlorophyll a apoprotein A1 (751 aa).

The next 8 membrane-spanning stretches (helical) occupy residues 73 to 96 (IFSAHFGQLGVILIWLSGMYFHGA), 159 to 182 (LYSTAIGGLLLAAAMFFAGWFHYH), 198 to 222 (MNHHLGGLLGLGSLGWAGHQIHVSL), 294 to 312 (TAHHHVAIAVLFLVAGHMY), 349 to 372 (WHAQLAINLALFGSLSIVVAHHMY), 388 to 414 (LSLFTHHMWIGGFCVVGAAAHAAIFMV), 436 to 458 (AIISHLNWVCIFLGFHSFGLYIH), and 533 to 551 (FLVHHIHAFTIHVTVLILL). Cysteine 575 and cysteine 584 together coordinate [4Fe-4S] cluster. Transmembrane regions (helical) follow at residues 591-612 (HVFLGLFWMYNSISVVIFHFSW) and 665-687 (LSAYGLIFLGAHFIWAFSLMFLF). Position 676 (histidine 676) interacts with chlorophyll a'. Residues methionine 684 and tyrosine 692 each coordinate chlorophyll a. Residue tryptophan 693 participates in phylloquinone binding. A helical membrane pass occupies residues 725–745 (AVGVAHYLLGGIATTWAFFLA).

This sequence belongs to the PsaA/PsaB family. The PsaA/B heterodimer binds the P700 chlorophyll special pair and subsequent electron acceptors. PSI consists of a core antenna complex that captures photons, and an electron transfer chain that converts photonic excitation into a charge separation. The eukaryotic PSI reaction center is composed of at least 11 subunits. It depends on P700 is a chlorophyll a/chlorophyll a' dimer, A0 is one or more chlorophyll a, A1 is one or both phylloquinones and FX is a shared 4Fe-4S iron-sulfur center. as a cofactor.

Its subcellular location is the plastid. It localises to the chloroplast thylakoid membrane. The catalysed reaction is reduced [plastocyanin] + hnu + oxidized [2Fe-2S]-[ferredoxin] = oxidized [plastocyanin] + reduced [2Fe-2S]-[ferredoxin]. PsaA and PsaB bind P700, the primary electron donor of photosystem I (PSI), as well as the electron acceptors A0, A1 and FX. PSI is a plastocyanin/cytochrome c6-ferredoxin oxidoreductase, converting photonic excitation into a charge separation, which transfers an electron from the donor P700 chlorophyll pair to the spectroscopically characterized acceptors A0, A1, FX, FA and FB in turn. Oxidized P700 is reduced on the lumenal side of the thylakoid membrane by plastocyanin or cytochrome c6. The protein is Photosystem I P700 chlorophyll a apoprotein A1 of Nephroselmis olivacea (Green alga).